A 341-amino-acid polypeptide reads, in one-letter code: Adenylosuccinate synthetase (341 aa).

GTP is bound by residues 12 to 18 (GDEGKGK) and 42 to 44 (GHS). The Proton acceptor role is filled by aspartate 13. The Mg(2+) site is built by aspartate 13 and glycine 42. Residues 13–16 (DEGK), 40–43 (NAGH), threonine 127, arginine 141, glutamine 179, threonine 194, and arginine 256 contribute to the IMP site. Histidine 43 functions as the Proton donor in the catalytic mechanism. A substrate-binding site is contributed by 252–258 (VVTGRKR). GTP-binding positions include arginine 258, 284-286 (CID), and 324-326 (STG).

It belongs to the adenylosuccinate synthetase family. Homodimer. It depends on Mg(2+) as a cofactor.

The protein localises to the cytoplasm. It carries out the reaction IMP + L-aspartate + GTP = N(6)-(1,2-dicarboxyethyl)-AMP + GDP + phosphate + 2 H(+). The protein operates within purine metabolism; AMP biosynthesis via de novo pathway; AMP from IMP: step 1/2. Its function is as follows. Plays an important role in the de novo pathway of purine nucleotide biosynthesis. Catalyzes the first committed step in the biosynthesis of AMP from IMP. This Methanosphaera stadtmanae (strain ATCC 43021 / DSM 3091 / JCM 11832 / MCB-3) protein is Adenylosuccinate synthetase.